A 223-amino-acid polypeptide reads, in one-letter code: Rab-like protein 2A (223 aa).

Residues 28-35, 76-80, and 133-136 contribute to the GTP site; these read GDSAVGKS, DTAGQ, and NKID. The tract at residues 200–223 is disordered; sequence KLEQKEEDTSGQEQSDTTKSPSPS. The segment covering 210–223 has biased composition (polar residues); sequence GQEQSDTTKSPSPS.

The protein belongs to the small GTPase superfamily. Rab family. In terms of assembly, interacts with IFT27, IFT81, IFT172, ATP6V1E1, HK1, LDHC, MAPRE1 and HSPA2. In terms of tissue distribution, isoform 2 is expressed in the testis and localizes to the mid-piece of the sperm tail (at protein level). Isoform 2 is expressed at higher levels in testis than isoform 1. Isoform 1 and isoform 2 are widely expressed and notably within other tissues containing motile cilia including the lung, trachea, brain, ovary and kidney.

Functionally, plays an essential role in male fertility, sperm intra-flagellar transport, and tail assembly. Binds, in a GTP-regulated manner, to a specific set of effector proteins including key proteins involved in cilia development and function and delivers them into the growing sperm tail. This chain is Rab-like protein 2A (Rabl2), found in Mus musculus (Mouse).